A 239-amino-acid polypeptide reads, in one-letter code: Uridylate kinase (239 aa).

12–15 (KLSG) contributes to the ATP binding site. Glycine 53 contacts UMP. Residues glycine 54 and arginine 58 each contribute to the ATP site. Residues aspartate 73 and 135-142 (TGSPCFTT) contribute to the UMP site. Residues threonine 162, tyrosine 168, and aspartate 171 each contribute to the ATP site.

This sequence belongs to the UMP kinase family. Homohexamer.

Its subcellular location is the cytoplasm. The enzyme catalyses UMP + ATP = UDP + ADP. The protein operates within pyrimidine metabolism; CTP biosynthesis via de novo pathway; UDP from UMP (UMPK route): step 1/1. Inhibited by UTP. Catalyzes the reversible phosphorylation of UMP to UDP. This Ruthia magnifica subsp. Calyptogena magnifica protein is Uridylate kinase.